The following is a 665-amino-acid chain: Soluble lamin-associated protein of 75 kDa (665 aa).

Positions 309-665 (AFASTSEGPE…GPGKKKAKLT (357 aa)) are disordered. Over residues 311–326 (ASTSEGPEKTPVSTRT) the composition is skewed to polar residues. Over residues 327–338 (RSSHLKRPKIGK) the composition is skewed to basic residues. A phosphoserine mark is found at Ser-348 and Ser-377. Acidic residues predominate over residues 376–397 (SSEEFLEEEPEQGVIDFEDESG). Residues 412 to 421 (QKQDGDKDSA) are compositionally biased toward basic and acidic residues. Residues 440 to 451 (TEDEDSTSEGLE) are compositionally biased toward acidic residues. Phosphoserine is present on residues Ser-447 and Ser-512. Composition is skewed to polar residues over residues 521-533 (LGSS…VSNI) and 553-566 (VSQN…SSVE). 3 positions are modified to phosphoserine: Ser-610, Ser-613, and Ser-630. Positions 646–665 (NLRRKAKGHKGPGKKKAKLT) are enriched in basic residues.

This sequence belongs to the FAM169 family.

It localises to the nucleus envelope. The protein localises to the nucleus inner membrane. The polypeptide is Soluble lamin-associated protein of 75 kDa (Fam169a) (Mus musculus (Mouse)).